We begin with the raw amino-acid sequence, 94 residues long: C-C motif chemokine 17 (94 aa).

The signal sequence occupies residues 1-23; the sequence is MAPLKMLALVTLLLGASLQHIHA. Intrachain disulfides connect C33/C57 and C34/C73.

This sequence belongs to the intercrine beta (chemokine CC) family. Constitutively expressed in thymus. Detected at lower levels in the lung, colon and small intestine. Expressed in stimulated peripheral blood mononuclear cells, but not in resting cells.

Its subcellular location is the secreted. Its function is as follows. Chemokine, which displays chemotactic activity for T lymphocytes, preferentially Th2 cells, but not monocytes or granulocytes. Therefore plays an important role in a wide range of inflammatory and immunological processes. Acts by binding to CCR4 at T-cell surface. Mediates GM-CSF/CSF2-driven pain and inflammation. In the brain, required to maintain the typical, highly branched morphology of hippocampal microglia under homeostatic conditions. May be important for the appropriate adaptation of microglial morphology and synaptic plasticity to acute lipopolysaccharide (LPS)-induced neuroinflammation. Plays a role in wound healing, mainly by inducing fibroblast migration into the wound. The chain is C-C motif chemokine 17 (CCL17) from Homo sapiens (Human).